The primary structure comprises 310 residues: Ribonuclease Z (310 aa).

5 residues coordinate Zn(2+): His61, His63, Asp65, His66, and His139. The active-site Proton acceptor is the Asp65. A disordered region spans residues 150-175 (EDDRPGRFDRPKAEELGVPVGPKFGR). Basic and acidic residues predominate over residues 153-164 (RPGRFDRPKAEE). Zn(2+) is bound by residues Asp210 and His268.

The protein belongs to the RNase Z family. Homodimer. Zn(2+) is required as a cofactor.

It catalyses the reaction Endonucleolytic cleavage of RNA, removing extra 3' nucleotides from tRNA precursor, generating 3' termini of tRNAs. A 3'-hydroxy group is left at the tRNA terminus and a 5'-phosphoryl group is left at the trailer molecule.. Functionally, zinc phosphodiesterase, which displays some tRNA 3'-processing endonuclease activity. Probably involved in tRNA maturation, by removing a 3'-trailer from precursor tRNA. This chain is Ribonuclease Z, found in Halorubrum lacusprofundi (strain ATCC 49239 / DSM 5036 / JCM 8891 / ACAM 34).